A 689-amino-acid polypeptide reads, in one-letter code: Glycine--tRNA ligase beta subunit (689 aa).

This sequence belongs to the class-II aminoacyl-tRNA synthetase family. As to quaternary structure, tetramer of two alpha and two beta subunits.

Its subcellular location is the cytoplasm. It carries out the reaction tRNA(Gly) + glycine + ATP = glycyl-tRNA(Gly) + AMP + diphosphate. The sequence is that of Glycine--tRNA ligase beta subunit from Escherichia coli O8 (strain IAI1).